We begin with the raw amino-acid sequence, 143 residues long: Endoribonuclease YbeY (143 aa).

Zn(2+)-binding residues include histidine 106, histidine 110, and histidine 116.

This sequence belongs to the endoribonuclease YbeY family. Zn(2+) is required as a cofactor.

The protein localises to the cytoplasm. In terms of biological role, single strand-specific metallo-endoribonuclease involved in late-stage 70S ribosome quality control and in maturation of the 3' terminus of the 16S rRNA. This Petrotoga mobilis (strain DSM 10674 / SJ95) protein is Endoribonuclease YbeY.